A 383-amino-acid polypeptide reads, in one-letter code: Chaperone protein DnaJ (383 aa).

The J domain maps to 6–71 (DYYEVLGVSK…QKRSQYDQFG (66 aa)). A CR-type zinc finger spans residues 141 to 223 (GVEKKVKVKK…CKGEGVEIGE (83 aa)). Residues cysteine 154, cysteine 157, cysteine 171, cysteine 174, cysteine 197, cysteine 200, cysteine 211, and cysteine 214 each contribute to the Zn(2+) site. 4 CXXCXGXG motif repeats span residues 154–161 (CSKCRGDG), 171–178 (CQTCHGTG), 197–204 (CPTCHGEG), and 211–218 (CSKCKGEG).

It belongs to the DnaJ family. As to quaternary structure, homodimer. Requires Zn(2+) as cofactor.

It localises to the cytoplasm. In terms of biological role, participates actively in the response to hyperosmotic and heat shock by preventing the aggregation of stress-denatured proteins and by disaggregating proteins, also in an autonomous, DnaK-independent fashion. Unfolded proteins bind initially to DnaJ; upon interaction with the DnaJ-bound protein, DnaK hydrolyzes its bound ATP, resulting in the formation of a stable complex. GrpE releases ADP from DnaK; ATP binding to DnaK triggers the release of the substrate protein, thus completing the reaction cycle. Several rounds of ATP-dependent interactions between DnaJ, DnaK and GrpE are required for fully efficient folding. Also involved, together with DnaK and GrpE, in the DNA replication of plasmids through activation of initiation proteins. The chain is Chaperone protein DnaJ from Porphyromonas gingivalis (strain ATCC BAA-308 / W83).